The chain runs to 240 residues: Ubiquinone biosynthesis O-methyltransferase (240 aa).

Residues arginine 44, glycine 64, aspartate 85, and methionine 129 each coordinate S-adenosyl-L-methionine.

This sequence belongs to the methyltransferase superfamily. UbiG/COQ3 family.

The enzyme catalyses a 3-demethylubiquinol + S-adenosyl-L-methionine = a ubiquinol + S-adenosyl-L-homocysteine + H(+). It catalyses the reaction a 3-(all-trans-polyprenyl)benzene-1,2-diol + S-adenosyl-L-methionine = a 2-methoxy-6-(all-trans-polyprenyl)phenol + S-adenosyl-L-homocysteine + H(+). The protein operates within cofactor biosynthesis; ubiquinone biosynthesis. Functionally, O-methyltransferase that catalyzes the 2 O-methylation steps in the ubiquinone biosynthetic pathway. This chain is Ubiquinone biosynthesis O-methyltransferase, found in Escherichia coli (strain UTI89 / UPEC).